A 645-amino-acid chain; its full sequence is Rab11 family-interacting protein 5 (645 aa).

The C2 domain maps to 1–146; that stretch reads MALVRDPEPA…AGRAQHTQWY (146 aa). 6 positions are modified to phosphoserine: Ser176, Ser283, Ser286, Ser307, Ser357, and Ser367. Residues 271-299 are disordered; it reads GAELLTRSPSHSSWLSTEGGRDSIQSPKL. Residues 277–286 show a composition bias toward polar residues; the sequence is RSPSHSSWLS. The disordered stretch occupies residues 341-550; it reads SHVYNEEPQP…STALSSGLER (210 aa). Positions 357–374 are enriched in low complexity; the sequence is SISGPFPPSSSLHSVPPR. Residues 375–387 are compositionally biased toward basic and acidic residues; sequence SSEEGSRSSDDSW. Phosphoserine occurs at positions 391 and 395. Basic residues predominate over residues 452-463; sequence RMGLFHHHHHQG. Residues Ser486, Ser530, Ser539, Ser545, and Ser640 each carry the phosphoserine modification. Positions 578 to 640 constitute an FIP-RBD domain; it reads KDSAVLDQSA…ETSPTLLQIS (63 aa).

Interacts with RAB11FIP4. Interacts with NAPG. Interacts with RO60. Interacts with RAB11A that has been activated by GTP binding. Post-translationally, phosphorylated on serine and threonine residues. Phosphorylation at Ser-357 is PKA-dependent.

The protein localises to the cytoplasm. The protein resides in the recycling endosome membrane. It localises to the early endosome membrane. Its subcellular location is the golgi apparatus membrane. It is found in the cytoplasmic vesicle. The protein localises to the secretory vesicle membrane. The protein resides in the mitochondrion membrane. In terms of biological role, rab effector involved in protein trafficking from apical recycling endosomes to the apical plasma membrane. Involved in insulin granule exocytosis. May regulate V-ATPase intracellular transport in response to extracellular acidosis. The polypeptide is Rab11 family-interacting protein 5 (Mus musculus (Mouse)).